Here is an 83-residue protein sequence, read N- to C-terminus: uncharacterized protein (83 aa).

3 helical membrane passes run 5 to 22 (VLLS…VYSI), 32 to 49 (IIKI…FSPA), and 56 to 78 (IGTI…IFIA).

It localises to the cell membrane. This is an uncharacterized protein from Rickettsia prowazekii (strain Madrid E).